We begin with the raw amino-acid sequence, 329 residues long: tRNA dimethylallyltransferase (329 aa).

12–19 contacts ATP; the sequence is GPTSVGKT. 14-19 serves as a coordination point for substrate; that stretch reads TSVGKT. Positions 37–40 are interaction with substrate tRNA; that stretch reads DSRY. Residues 306–329 form a disordered region; that stretch reads LREESDEGDVAVHQSGGGKEAPRA. Gly residues predominate over residues 320-329; it reads SGGGKEAPRA.

Belongs to the IPP transferase family. Monomer. Mg(2+) serves as cofactor.

It catalyses the reaction adenosine(37) in tRNA + dimethylallyl diphosphate = N(6)-dimethylallyladenosine(37) in tRNA + diphosphate. Catalyzes the transfer of a dimethylallyl group onto the adenine at position 37 in tRNAs that read codons beginning with uridine, leading to the formation of N6-(dimethylallyl)adenosine (i(6)A). This is tRNA dimethylallyltransferase from Thermomicrobium roseum (strain ATCC 27502 / DSM 5159 / P-2).